The following is a 464-amino-acid chain: Propanal dehydrogenase (CoA-propanoylating) (464 aa).

The targets protein to the BMC stretch occupies residues M1–L18.

Belongs to the EutE/PduP family. As to quaternary structure, interacts with BMC shell proteins PduA and PduJ, which target this protein to BMC. Interacts with PduQ, probably via the N-terminus of PduQ. Interacts with PduK, probably with its BMC-containing N-terminus.

The protein resides in the bacterial microcompartment. The catalysed reaction is propanal + NAD(+) + CoA = propanoyl-CoA + NADH + H(+). It participates in polyol metabolism; 1,2-propanediol degradation. Functionally, a CoA-acylating aldehyde dehydrogenase required for optimal 1,2-propanediol (1,2-PD) degradation. Optimizes growth in the bacterial microcompartment (BMC) dedicated to 1,2-PD degradation by minimizing propionaldehyde toxicity. Directly targeted to the BMC. NAD(+) and NADH are regenerated internally within the Pdu BMC by the PduP and PduQ enzymes, which reduce NAD(+) and oxidize NADH respectively, although there must also be cofactor transport across the BMC. The 1,2-PD-specific bacterial microcompartment (BMC) concentrates low levels of 1,2-PD catabolic enzymes, concentrates volatile reaction intermediates thus enhancing pathway flux and keeps the level of toxic, mutagenic propionaldehyde low. This chain is Propanal dehydrogenase (CoA-propanoylating), found in Salmonella typhimurium (strain LT2 / SGSC1412 / ATCC 700720).